We begin with the raw amino-acid sequence, 286 residues long: Haloalkane dehalogenase 2 (286 aa).

Residues 35 to 134 (PPILLCHGNP…RVRGVVLGNT (100 aa)) form the AB hydrolase-1 domain. D109 serves as the catalytic Nucleophile. D238 serves as the catalytic Proton donor. H267 functions as the Proton acceptor in the catalytic mechanism.

It belongs to the haloalkane dehalogenase family. Type 1 subfamily. In terms of assembly, monomer.

The enzyme catalyses 1-haloalkane + H2O = a halide anion + a primary alcohol + H(+). In terms of biological role, catalyzes hydrolytic cleavage of carbon-halogen bonds in halogenated aliphatic compounds, leading to the formation of the corresponding primary alcohols, halide ions and protons. The protein is Haloalkane dehalogenase 2 (dhmA2) of Mycobacterium bovis (strain ATCC BAA-935 / AF2122/97).